A 159-amino-acid polypeptide reads, in one-letter code: Nudix hydrolase DR_1025 (159 aa).

3 residues coordinate Mg(2+): methionine 1, arginine 14, and serine 49. Position 1–6 (1–6 (MEHDER)) interacts with ATP. A Nudix hydrolase domain is found at 11-144 (VELRAAGVVL…QIRMYQTKLF (134 aa)). Residue 50–51 (GA) participates in ATP binding. Positions 50-71 (GAVEDGENPQDAAVREACEETG) match the Nudix box motif. Residues glutamate 53 and glutamate 65 each coordinate Mg(2+). 87-89 (FPD) is an ATP binding site. Arginine 95 contributes to the Mg(2+) binding site.

The protein belongs to the Nudix hydrolase family. Homodimer. It depends on Mg(2+) as a cofactor.

The enzyme catalyses 8-oxo-dGTP + H2O = 8-oxo-dGDP + phosphate + H(+). It carries out the reaction 8-oxo-GTP + H2O = 8-oxo-GDP + phosphate + H(+). The catalysed reaction is P(1),P(4)-bis(5'-adenosyl) tetraphosphate + H2O = AMP + ATP + 2 H(+). Its function is as follows. Hydrolase that can act as a nucleoside triphosphatase and a dinucleoside polyphosphate pyrophosphatase. The best substrates are 8-oxo-dGTP and 8-oxo-GTP. Other substrates include Ap4A, dGTP and GTP. May be involved in protection from damage caused by radiation. The protein is Nudix hydrolase DR_1025 of Deinococcus radiodurans (strain ATCC 13939 / DSM 20539 / JCM 16871 / CCUG 27074 / LMG 4051 / NBRC 15346 / NCIMB 9279 / VKM B-1422 / R1).